The primary structure comprises 334 residues: MKVKVGVNGYGTIGKRVAYAITKQDDMELVGVVKTKPDFEAYRAKELGIPVYAANEEFLSRFESVGFEVEGTLNDLLEKVDVIVDATPGGVGAKNKPLYEKAGVKAVFQGGEKANVAEVSFVAQANYEKALGKSYVRVVSCNTTGLVRTLNAIREYADYVYAVMIRRAADPNDIKRGPINAIKPSVEVPSHHGPDVQTVIPINIETMAFVVPTTIMHVHSVMVELKKPLTREDVIDIFENTTRVLLFEKEKGFESTAQIIEFARDLHREWNNLYEIAVWKESINVKGNRLYYIQAVHQESDVVPENVDAIRAMFELADKEESIKKTNKSLGILK.

Residues 12 to 13 (TI) and Gly111 contribute to the NAD(+) site. 140 to 142 (SCN) contributes to the D-glyceraldehyde 3-phosphate binding site. The Nucleophile role is filled by Cys141. NAD(+) is bound at residue Arg167. 192–193 (HG) serves as a coordination point for D-glyceraldehyde 3-phosphate. An NAD(+)-binding site is contributed by Gln298.

It belongs to the glyceraldehyde-3-phosphate dehydrogenase family. As to quaternary structure, homotetramer.

It localises to the cytoplasm. It carries out the reaction D-glyceraldehyde 3-phosphate + phosphate + NADP(+) = (2R)-3-phospho-glyceroyl phosphate + NADPH + H(+). It catalyses the reaction D-glyceraldehyde 3-phosphate + phosphate + NAD(+) = (2R)-3-phospho-glyceroyl phosphate + NADH + H(+). Its pathway is carbohydrate degradation; glycolysis; pyruvate from D-glyceraldehyde 3-phosphate: step 1/5. The sequence is that of Glyceraldehyde-3-phosphate dehydrogenase (gap) from Pyrococcus abyssi (strain GE5 / Orsay).